A 341-amino-acid chain; its full sequence is Putative ankyrin repeat protein FPV031 (341 aa).

5 ANK repeats span residues 23–55 (DRNS…FQET), 58–87 (DNLT…IINQ), 92–124 (CGNT…ITNN), 125–158 (DGFT…IRDN), and 163–195 (TGLT…YSTC).

The sequence is that of Putative ankyrin repeat protein FPV031 (ANK3) from Fowlpox virus (strain NVSL) (FPV).